A 172-amino-acid chain; its full sequence is Ribosome maturation factor RimM (172 aa).

Positions 93–167 constitute a PRC barrel domain; the sequence is DEHEFYYHEI…RVVITPIPGM (75 aa).

This sequence belongs to the RimM family. Binds ribosomal protein uS19.

The protein localises to the cytoplasm. Functionally, an accessory protein needed during the final step in the assembly of 30S ribosomal subunit, possibly for assembly of the head region. Essential for efficient processing of 16S rRNA. May be needed both before and after RbfA during the maturation of 16S rRNA. It has affinity for free ribosomal 30S subunits but not for 70S ribosomes. This is Ribosome maturation factor RimM from Exiguobacterium sp. (strain ATCC BAA-1283 / AT1b).